The sequence spans 341 residues: Tryptophan--tRNA ligase (341 aa).

Residues 11 to 13 and 19 to 20 each bind ATP; these read RPT and GH. Residues 12 to 20 carry the 'HIGH' region motif; the sequence is PTGKLHIGH. D140 contacts L-tryptophan. Residues 152–154, L193, and 201–205 each bind ATP; these read GED and KMSKS. The short motif at 201–205 is the 'KMSKS' region element; it reads KMSKS.

It belongs to the class-I aminoacyl-tRNA synthetase family. As to quaternary structure, homodimer.

The protein localises to the cytoplasm. It carries out the reaction tRNA(Trp) + L-tryptophan + ATP = L-tryptophyl-tRNA(Trp) + AMP + diphosphate + H(+). In terms of biological role, catalyzes the attachment of tryptophan to tRNA(Trp). The sequence is that of Tryptophan--tRNA ligase from Clostridium longisporum.